A 170-amino-acid polypeptide reads, in one-letter code: Peptide deformylase-like (170 aa).

Glu139 is an active-site residue.

The protein belongs to the polypeptide deformylase family.

This Bradyrhizobium diazoefficiens (strain JCM 10833 / BCRC 13528 / IAM 13628 / NBRC 14792 / USDA 110) protein is Peptide deformylase-like.